Consider the following 496-residue polypeptide: GTPase Der (496 aa).

2 consecutive EngA-type G domains span residues 3–166 (PVVA…FDNL) and 208–381 (IKLA…RSAT). GTP contacts are provided by residues 9–16 (GRPNVGKS), 56–60 (DTGGI), 118–121 (NKVD), 214–221 (GRPNVGKS), 261–265 (DTAGV), and 326–329 (NKWD). Residues 382 to 466 (TRVGTSVLTR…PIRIQFQNSD (85 aa)) form the KH-like domain.

The protein belongs to the TRAFAC class TrmE-Era-EngA-EngB-Septin-like GTPase superfamily. EngA (Der) GTPase family. As to quaternary structure, associates with the 50S ribosomal subunit.

Functionally, GTPase that plays an essential role in the late steps of ribosome biogenesis. The chain is GTPase Der from Vibrio vulnificus (strain YJ016).